We begin with the raw amino-acid sequence, 390 residues long: Alkanesulfonate monooxygenase 1 (390 aa).

Residues 364-390 (TGSSVNTGPFGETIAGDHRPKSLASAS) form a disordered region.

The protein belongs to the SsuD family.

The catalysed reaction is an alkanesulfonate + FMNH2 + O2 = an aldehyde + FMN + sulfite + H2O + 2 H(+). In terms of biological role, catalyzes the desulfonation of aliphatic sulfonates. This chain is Alkanesulfonate monooxygenase 1 (ssuD1), found in Mesorhizobium japonicum (strain LMG 29417 / CECT 9101 / MAFF 303099) (Mesorhizobium loti (strain MAFF 303099)).